The chain runs to 361 residues: Probable pectinesterase 50 (361 aa).

The first 22 residues, Met-1–Ala-22, serve as a signal peptide directing secretion. Gln-174 is a substrate binding site. Residue Asp-197 is the Proton donor of the active site. The Nucleophile role is filled by Asp-218. Substrate is bound by residues Arg-275 and Trp-277.

The protein belongs to the pectinesterase family. In terms of tissue distribution, expressed in flower buds.

Its subcellular location is the secreted. The protein resides in the cell wall. It carries out the reaction [(1-&gt;4)-alpha-D-galacturonosyl methyl ester](n) + n H2O = [(1-&gt;4)-alpha-D-galacturonosyl](n) + n methanol + n H(+). It functions in the pathway glycan metabolism; pectin degradation; 2-dehydro-3-deoxy-D-gluconate from pectin: step 1/5. In terms of biological role, acts in the modification of cell walls via demethylesterification of cell wall pectin. This is Probable pectinesterase 50 (PME50) from Arabidopsis thaliana (Mouse-ear cress).